Consider the following 529-residue polypeptide: Endoglucanase 21 (529 aa).

An N-terminal signal peptide occupies residues 1 to 24 (MVAAMTMCAAVAVLLVLTSTMAAA). The active-site Nucleophile is the Asp-89. N-linked (GlcNAc...) asparagine glycosylation is present at Asn-342. Active-site residues include His-429, Asp-481, and Glu-490.

The protein belongs to the glycosyl hydrolase 9 (cellulase E) family. Expressed in roots and flowers.

It localises to the secreted. It carries out the reaction Endohydrolysis of (1-&gt;4)-beta-D-glucosidic linkages in cellulose, lichenin and cereal beta-D-glucans.. This Oryza sativa subsp. japonica (Rice) protein is Endoglucanase 21 (GLU9).